The primary structure comprises 906 residues: Disintegrin and metalloproteinase domain-containing protein 22 (906 aa).

The N-terminal stretch at 1 to 25 (MQAAVAVSVPFLLLCVLGTCPPARC) is a signal peptide. Positions 26 to 222 (GQAGDASLME…KFILKPRPKR (197 aa)) are excised as a propeptide. N-linked (GlcNAc...) asparagine glycosylation occurs at Asn-175. Residues 223–736 (SKRQLRRYPR…LSGNGVAGTN (514 aa)) are Extracellular-facing. The Peptidase M12B domain maps to 239-438 (KYIELMIVND…GGGACLFNKP (200 aa)). 17 disulfide bridges follow: Cys-349–Cys-433, Cys-392–Cys-417, Cys-394–Cys-401, Cys-447–Cys-477, Cys-458–Cys-474, Cys-460–Cys-466, Cys-473–Cys-494, Cys-485–Cys-491, Cys-490–Cys-516, Cys-503–Cys-523, Cys-510–Cys-542, Cys-535–Cys-547, Cys-554–Cys-605, Cys-569–Cys-635, Cys-583–Cys-593, Cys-600–Cys-663, and Cys-657–Cys-668. The Disintegrin domain maps to 444–531 (PPECGNGFIE…QCAPNIHKMD (88 aa)). Residue Asn-519 is glycosylated (N-linked (GlcNAc...) asparagine). Residue Asn-634 is glycosylated (N-linked (GlcNAc...) asparagine). N-linked (GlcNAc...) asparagine glycosylation is present at Asn-675. In terms of domain architecture, EGF-like spans 675 to 712 (NFSTCLSSKEGTICSGNGVCSNELKCVCNRHWIGSDCN). 3 cysteine pairs are disulfide-bonded: Cys-679/Cys-694, Cys-688/Cys-700, and Cys-702/Cys-711. Residues 737–757 (IIIGIIAGTILVLALILGITA) traverse the membrane as a helical segment. At 758 to 906 (WGYKNYREQR…QSARLWETSI (149 aa)) the chain is on the cytoplasmic side. The disordered stretch occupies residues 785-906 (YSDIPPGVST…QSARLWETSI (122 aa)). Low complexity predominate over residues 793–810 (STNSASSSKKRSNGLSHS). The residue at position 810 (Ser-810) is a Phosphoserine. The span at 811 to 829 (WSERIPDTKHISDICENGR) shows a compositional bias: basic and acidic residues. Phosphoserine is present on Ser-834. Residues 842 to 853 (NKKKIRGKRFRP) show a composition bias toward basic residues. 4 positions are modified to phosphoserine: Ser-857, Ser-862, Ser-866, and Ser-870. Residues 862–877 (SPAKSPSSSTGSIASS) show a composition bias toward low complexity.

As to quaternary structure, interacts with LGI1. Interacts with DLG4/PSD95. Also binds LGI4. Interacts with KCNA2 and DLG2. Interacts with ADAM11. Interacts (via C-terminus) with YWHAB/14-3-3 beta. Interacts (via C-terminus) with YWHAZ/14-3-3 zeta. In terms of processing, the precursor is cleaved by a furin endopeptidase. In terms of tissue distribution, highly expressed in the brain and in some high-grade but not low-grade gliomas. Detected slightly or not at all in other tissues.

The protein localises to the cell membrane. The protein resides in the cell projection. Its subcellular location is the axon. In terms of biological role, probable ligand for integrin in the brain. This is a non catalytic metalloprotease-like protein. Involved in regulation of cell adhesion and spreading and in inhibition of cell proliferation. Neuronal receptor for LGI1. The protein is Disintegrin and metalloproteinase domain-containing protein 22 (ADAM22) of Homo sapiens (Human).